Consider the following 312-residue polypeptide: Methionyl-tRNA formyltransferase (312 aa).

Residue 110–113 (SLLP) participates in (6S)-5,6,7,8-tetrahydrofolate binding.

It belongs to the Fmt family.

It carries out the reaction L-methionyl-tRNA(fMet) + (6R)-10-formyltetrahydrofolate = N-formyl-L-methionyl-tRNA(fMet) + (6S)-5,6,7,8-tetrahydrofolate + H(+). Attaches a formyl group to the free amino group of methionyl-tRNA(fMet). The formyl group appears to play a dual role in the initiator identity of N-formylmethionyl-tRNA by promoting its recognition by IF2 and preventing the misappropriation of this tRNA by the elongation apparatus. The chain is Methionyl-tRNA formyltransferase from Mycobacterium ulcerans (strain Agy99).